The chain runs to 330 residues: GMP reductase (330 aa).

C180 acts as the Thioimidate intermediate in catalysis. Residue 209 to 232 (LIADGGIRHNGDIAKSVRFGASMV) participates in NADP(+) binding.

This sequence belongs to the IMPDH/GMPR family. GuaC type 2 subfamily.

It carries out the reaction IMP + NH4(+) + NADP(+) = GMP + NADPH + 2 H(+). Functionally, catalyzes the irreversible NADPH-dependent deamination of GMP to IMP. It functions in the conversion of nucleobase, nucleoside and nucleotide derivatives of G to A nucleotides, and in maintaining the intracellular balance of A and G nucleotides. The chain is GMP reductase from Lactobacillus johnsonii (strain CNCM I-12250 / La1 / NCC 533).